We begin with the raw amino-acid sequence, 225 residues long: RNA chaperone ProQ (225 aa).

A disordered region spans residues 107-169 (KARVQAQRAA…VAAKAPREER (63 aa)). Positions 109 to 118 (RVQAQRAAQQ) are enriched in low complexity. Residues 137 to 146 (RERKPRPQQP) are compositionally biased toward basic residues. Basic and acidic residues predominate over residues 147–156 (RRKEGAEQRK).

This sequence belongs to the ProQ family.

It localises to the cytoplasm. Its function is as follows. RNA chaperone with significant RNA binding, RNA strand exchange and RNA duplexing activities. May regulate ProP activity through an RNA-based, post-transcriptional mechanism. The chain is RNA chaperone ProQ from Klebsiella pneumoniae subsp. pneumoniae (strain ATCC 700721 / MGH 78578).